A 477-amino-acid chain; its full sequence is tRNA-2-methylthio-N(6)-dimethylallyladenosine synthase (477 aa).

In terms of domain architecture, MTTase N-terminal spans 3-120 (KKLHIKTWGC…LPTMIKQVQE (118 aa)). 6 residues coordinate [4Fe-4S] cluster: cysteine 12, cysteine 49, cysteine 83, cysteine 157, cysteine 161, and cysteine 164. The Radical SAM core domain maps to 143-375 (RAEGATAFVS…QHVINNQSMQ (233 aa)). Residues 378 to 441 (RAMLGSTQRI…PNSLRGKFLR (64 aa)) form the TRAM domain.

This sequence belongs to the methylthiotransferase family. MiaB subfamily. In terms of assembly, monomer. The cofactor is [4Fe-4S] cluster.

Its subcellular location is the cytoplasm. It carries out the reaction N(6)-dimethylallyladenosine(37) in tRNA + (sulfur carrier)-SH + AH2 + 2 S-adenosyl-L-methionine = 2-methylsulfanyl-N(6)-dimethylallyladenosine(37) in tRNA + (sulfur carrier)-H + 5'-deoxyadenosine + L-methionine + A + S-adenosyl-L-homocysteine + 2 H(+). In terms of biological role, catalyzes the methylthiolation of N6-(dimethylallyl)adenosine (i(6)A), leading to the formation of 2-methylthio-N6-(dimethylallyl)adenosine (ms(2)i(6)A) at position 37 in tRNAs that read codons beginning with uridine. The chain is tRNA-2-methylthio-N(6)-dimethylallyladenosine synthase from Aeromonas hydrophila subsp. hydrophila (strain ATCC 7966 / DSM 30187 / BCRC 13018 / CCUG 14551 / JCM 1027 / KCTC 2358 / NCIMB 9240 / NCTC 8049).